The following is a 178-amino-acid chain: Large ribosomal subunit protein uL6 (178 aa).

Belongs to the universal ribosomal protein uL6 family. In terms of assembly, part of the 50S ribosomal subunit.

In terms of biological role, this protein binds to the 23S rRNA, and is important in its secondary structure. It is located near the subunit interface in the base of the L7/L12 stalk, and near the tRNA binding site of the peptidyltransferase center. The polypeptide is Large ribosomal subunit protein uL6 (Limosilactobacillus reuteri (strain DSM 20016) (Lactobacillus reuteri)).